Here is a 336-residue protein sequence, read N- to C-terminus: Fructose-1,6-bisphosphatase class 1 (336 aa).

Glutamate 90, aspartate 112, leucine 114, and aspartate 115 together coordinate Mg(2+). Substrate-binding positions include 115 to 118 (DGSS), asparagine 211, and lysine 277. Residue glutamate 283 participates in Mg(2+) binding.

It belongs to the FBPase class 1 family. As to quaternary structure, homotetramer. It depends on Mg(2+) as a cofactor.

Its subcellular location is the cytoplasm. The catalysed reaction is beta-D-fructose 1,6-bisphosphate + H2O = beta-D-fructose 6-phosphate + phosphate. The protein operates within carbohydrate biosynthesis; gluconeogenesis. The sequence is that of Fructose-1,6-bisphosphatase class 1 from Pseudomonas syringae pv. syringae (strain B728a).